The chain runs to 482 residues: Probable cytosol aminopeptidase (482 aa).

Mn(2+) contacts are provided by K251 and D256. Residue K263 is part of the active site. Positions 274, 333, and 335 each coordinate Mn(2+). R337 is a catalytic residue.

It belongs to the peptidase M17 family. Mn(2+) is required as a cofactor.

The protein resides in the cytoplasm. It carries out the reaction Release of an N-terminal amino acid, Xaa-|-Yaa-, in which Xaa is preferably Leu, but may be other amino acids including Pro although not Arg or Lys, and Yaa may be Pro. Amino acid amides and methyl esters are also readily hydrolyzed, but rates on arylamides are exceedingly low.. The catalysed reaction is Release of an N-terminal amino acid, preferentially leucine, but not glutamic or aspartic acids.. Presumably involved in the processing and regular turnover of intracellular proteins. Catalyzes the removal of unsubstituted N-terminal amino acids from various peptides. The polypeptide is Probable cytosol aminopeptidase (Acinetobacter baumannii (strain AB307-0294)).